We begin with the raw amino-acid sequence, 65 residues long: Photosystem II reaction center protein J (65 aa).

Residues 1 to 18 (MSSKLKGPDGRLPDRLPD) are compositionally biased toward basic and acidic residues. The interval 1–21 (MSSKLKGPDGRLPDRLPDGRP) is disordered. The chain crosses the membrane as a helical span at residues 36-56 (LWLVATAGGIAVIFVLGIFFY).

It belongs to the PsbJ family. As to quaternary structure, PSII is composed of 1 copy each of membrane proteins PsbA, PsbB, PsbC, PsbD, PsbE, PsbF, PsbH, PsbI, PsbJ, PsbK, PsbL, PsbM, PsbT, PsbX, PsbY, Psb30/Ycf12, peripheral proteins PsbO, CyanoQ (PsbQ), PsbU, PsbV and a large number of cofactors. It forms dimeric complexes.

Its subcellular location is the cellular thylakoid membrane. Its function is as follows. One of the components of the core complex of photosystem II (PSII). PSII is a light-driven water:plastoquinone oxidoreductase that uses light energy to abstract electrons from H(2)O, generating O(2) and a proton gradient subsequently used for ATP formation. It consists of a core antenna complex that captures photons, and an electron transfer chain that converts photonic excitation into a charge separation. The protein is Photosystem II reaction center protein J of Prochlorococcus marinus (strain SARG / CCMP1375 / SS120).